The sequence spans 625 residues: Serine/threonine-protein kinase PknB (625 aa).

Over 1–331 (MTTPQHLSDR…KQRSTSVARW (331 aa)) the chain is Cytoplasmic. One can recognise a Protein kinase domain in the interval 11-274 (YELGEILGFG…TAAEMRADLI (264 aa)). ATP contacts are provided by residues 17–25 (LGFGGMSEV), lysine 40, and 93–95 (EYV). The active-site Proton acceptor is aspartate 138. ATP contacts are provided by residues 140 to 143 (KPAN) and aspartate 156. Residues asparagine 143 and aspartate 156 each coordinate Mg(2+). Phosphoserine; by autocatalysis is present on serine 169. Residues threonine 171, threonine 173, and threonine 294 each carry the phosphothreonine; by autocatalysis modification. At serine 295 the chain carries Phosphoserine; by autocatalysis. Residues 302–321 (ADRAGAATQDMPVPRPAGYS) form a disordered region. Threonine 309 carries the post-translational modification Phosphothreonine; by autocatalysis. The chain crosses the membrane as a helical span at residues 332–352 (LIAVAVLAVLTVVVTVAINMV). The Extracellular segment spans residues 353–625 (GGNPRNVQVP…DAKITLSFAA (273 aa)). PASTA domains follow at residues 355–421 (NPRN…NVST), 422–489 (GPEQ…VVGA), 490–556 (GPED…RVSK), and 557–625 (GNQF…SFAA). A disordered region spans residues 591–612 (DVRDSGQRTNAVVTQSPSAGTP). Over residues 597–611 (QRTNAVVTQSPSAGT) the composition is skewed to polar residues.

The protein belongs to the protein kinase superfamily. Ser/Thr protein kinase family. Homodimer. Autophosphorylated. Dephosphorylated by PstP.

The protein resides in the cell membrane. The enzyme catalyses L-seryl-[protein] + ATP = O-phospho-L-seryl-[protein] + ADP + H(+). It catalyses the reaction L-threonyl-[protein] + ATP = O-phospho-L-threonyl-[protein] + ADP + H(+). With respect to regulation, by K-252a. Its function is as follows. Protein kinase that regulates many aspects of mycobacterial physiology. Is a key component of a signal transduction pathway that regulates cell growth, cell shape and cell division via phosphorylation of target proteins. Probably phosphorylates RseA. The sequence is that of Serine/threonine-protein kinase PknB (pknB) from Mycolicibacterium smegmatis (strain ATCC 700084 / mc(2)155) (Mycobacterium smegmatis).